Consider the following 571-residue polypeptide: MDRAVNRVVLENEEREAKNTWRLVFRIAVLLLMVMTLAISAAALVYSMGASTPRDLAGISTVISKTEDKVTSLLSSKQDVIDRIYKQVALESPLALLNTESIIMNAITSLSYQINGAANNSGCGEPVHDPDYIGGIGKELIVDDISDVTSFYPSAYQEHLNFIPAPTTGSGCTRIPSFDMSTTHYCYTHNVILSGCRDHSHSHQYLALGVLRTSATGRVFFSTLRSINLDDTQNRKSCSVSATPLGCDMLCSKVTETEEEDYKSVTPTSMVHGRLGFDGQYHEKDLDTTVLFKDWVANYPGVGGGSFIDDRVWFPVYGGLKPNSPSDTAQEGKYVIYKRYNNTCPDEQDYQIRMAKSSYKPGRFGGKRVQQAILSIKVSTSLGEDPVLTIPPNTITLMGAEGRVLTVGTSHFLYQRGSSYFSPALLYPMTVNNKTATLHSPYTFNAFTRPGSVPCQASARCPNSCITGVYTDPYPLIFHRNHTLRGVFGTMLDDEQARLNPVSAVFDNISRSRVTRVSSSSTKAAYTTSTCFKVVKTNKAYCLSIAEISNTLFGEFRIVPLLVEILKDDRV.

The Intravirion portion of the chain corresponds to 1 to 26; it reads MDRAVNRVVLENEEREAKNTWRLVFR. A helical transmembrane segment spans residues 27–47; it reads IAVLLLMVMTLAISAAALVYS. The Virion surface segment spans residues 48-571; the sequence is MGASTPRDLA…LVEILKDDRV (524 aa). N-linked (GlcNAc...) asparagine; by host glycosylation occurs at Asn119. The important for interaction with fusion/F protein stretch occupies residues 124 to 152; the sequence is GEPVHDPDYIGGIGKELIVDDISDVTSFY. Disulfide bonds link Cys172–Cys196, Cys186–Cys247, and Cys238–Cys251. An involved in neuraminidase activity region spans residues 234–239; that stretch reads NRKSCS. Asn341 and Asn433 each carry an N-linked (GlcNAc...) asparagine; by host glycan. Intrachain disulfides connect Cys344-Cys461 and Cys455-Cys465. 3 N-linked (GlcNAc...) asparagine; by host glycosylation sites follow: Asn481, Asn508, and Asn538. A disulfide bond links Cys531 and Cys542.

It belongs to the paramyxoviruses hemagglutinin-neuraminidase family. In terms of assembly, homotetramer; composed of disulfide-linked homodimers. Interacts with F protein trimer. Interacts with host CG-1B; this interaction inhibits viral adsorption and replication rather than internalization.

Its subcellular location is the virion membrane. The protein resides in the host cell membrane. The catalysed reaction is Hydrolysis of alpha-(2-&gt;3)-, alpha-(2-&gt;6)-, alpha-(2-&gt;8)- glycosidic linkages of terminal sialic acid residues in oligosaccharides, glycoproteins, glycolipids, colominic acid and synthetic substrates.. Mediates the viral entry into the host cell together with fusion/F protein. Attaches the virus to sialic acid-containing cell receptors and thereby initiates infection. Binding of HN protein to the receptor induces a conformational change that allows the F protein to trigger virion/cell membranes fusion. In terms of biological role, neuraminidase activity ensures the efficient spread of the virus by dissociating the mature virions from the neuraminic acid containing glycoproteins. This is Hemagglutinin-neuraminidase (HN) from Gallus gallus (Chicken).